Here is a 526-residue protein sequence, read N- to C-terminus: Bifunctional purine biosynthesis protein PurH (526 aa).

Positions 15–161 (DVVPIRRALI…KNHANVAIVV (147 aa)) constitute an MGS-like domain.

Belongs to the PurH family.

It catalyses the reaction (6R)-10-formyltetrahydrofolate + 5-amino-1-(5-phospho-beta-D-ribosyl)imidazole-4-carboxamide = 5-formamido-1-(5-phospho-D-ribosyl)imidazole-4-carboxamide + (6S)-5,6,7,8-tetrahydrofolate. It carries out the reaction IMP + H2O = 5-formamido-1-(5-phospho-D-ribosyl)imidazole-4-carboxamide. It participates in purine metabolism; IMP biosynthesis via de novo pathway; 5-formamido-1-(5-phospho-D-ribosyl)imidazole-4-carboxamide from 5-amino-1-(5-phospho-D-ribosyl)imidazole-4-carboxamide (10-formyl THF route): step 1/1. Its pathway is purine metabolism; IMP biosynthesis via de novo pathway; IMP from 5-formamido-1-(5-phospho-D-ribosyl)imidazole-4-carboxamide: step 1/1. The chain is Bifunctional purine biosynthesis protein PurH from Leifsonia xyli subsp. xyli (strain CTCB07).